A 151-amino-acid chain; its full sequence is Small ribosomal subunit protein uS15 (151 aa).

Phosphoserine is present on residues serine 21 and serine 32.

This sequence belongs to the universal ribosomal protein uS15 family. As to quaternary structure, component of the small ribosomal subunit (SSU). Mature yeast ribosomes consist of a small (40S) and a large (60S) subunit. The 40S small subunit contains 1 molecule of ribosomal RNA (18S rRNA) and at least 33 different proteins. The large 60S subunit contains 3 rRNA molecules (25S, 5.8S and 5S rRNA) and at least 46 different proteins.

Its subcellular location is the cytoplasm. In terms of biological role, component of the ribosome, a large ribonucleoprotein complex responsible for the synthesis of proteins in the cell. The small ribosomal subunit (SSU) binds messenger RNAs (mRNAs) and translates the encoded message by selecting cognate aminoacyl-transfer RNA (tRNA) molecules. The large subunit (LSU) contains the ribosomal catalytic site termed the peptidyl transferase center (PTC), which catalyzes the formation of peptide bonds, thereby polymerizing the amino acids delivered by tRNAs into a polypeptide chain. The nascent polypeptides leave the ribosome through a tunnel in the LSU and interact with protein factors that function in enzymatic processing, targeting, and the membrane insertion of nascent chains at the exit of the ribosomal tunnel. The chain is Small ribosomal subunit protein uS15 (rps13) from Schizosaccharomyces pombe (strain 972 / ATCC 24843) (Fission yeast).